We begin with the raw amino-acid sequence, 526 residues long: Alpha-1,3-mannosyl-glycoprotein 4-beta-N-acetylglucosaminyltransferase A (526 aa).

Over 1-6 the chain is Cytoplasmic; that stretch reads MRLRNG. Residues 7–27 form a helical; Signal-anchor for type II membrane protein membrane-spanning segment; sequence TVATALVFVTSFLTLSWYTTW. Residues 28-63 adopt a coiled-coil conformation; that stretch reads QNGKEKLIAYQREFLALKERLRVAEHRISQRSSELN. The Lumenal segment spans residues 28 to 526; the sequence is QNGKEKLIAY…NEIHIKKVTS (499 aa). N-linked (GlcNAc...) asparagine glycosylation occurs at asparagine 449. Serine 465 is subject to Phosphoserine.

The protein belongs to the glycosyltransferase 54 family. A divalent metal cation serves as cofactor. Post-translationally, N-glycosylated.

It is found in the golgi apparatus membrane. Its subcellular location is the secreted. The catalysed reaction is N(4)-{beta-D-GlcNAc-(1-&gt;2)-alpha-D-Man-(1-&gt;3)-[beta-D-GlcNAc-(1-&gt;2)-alpha-D-Man-(1-&gt;6)]-beta-D-Man-(1-&gt;4)-beta-D-GlcNAc-(1-&gt;4)-beta-D-GlcNAc}-L-asparaginyl-[protein] + UDP-N-acetyl-alpha-D-glucosamine = N(4)-{beta-D-GlcNAc-(1-&gt;2)-[beta-D-GlcNAc-(1-&gt;4)]-alpha-D-Man-(1-&gt;3)-[beta-D-GlcNAc-(1-&gt;2)-alpha-D-Man-(1-&gt;6)]-beta-D-Man-(1-&gt;4)-beta-D-GlcNAc-(1-&gt;4)-beta-D-GlcNAc}-L-asparaginyl-[protein] + UDP + H(+). It carries out the reaction an N(4)-{beta-D-GlcNAc-(1-&gt;2)-alpha-D-Man-(1-&gt;3)-[alpha-D-Man-(1-&gt;6)]-beta-D-Man-(1-&gt;4)-beta-D-GlcNAc-(1-&gt;4)-beta-D-GlcNAc}-L-asparaginyl-[protein] + UDP-N-acetyl-alpha-D-glucosamine = an N(4)-{beta-D-GlcNAc-(1-&gt;2)-[beta-D-GlcNAc-(1-&gt;4)]-alpha-D-Man-(1-&gt;3)-[alpha-D-Man-(1-&gt;6)]-beta-D-Man-(1-&gt;4)-beta-D-GlcNAc-(1-&gt;4)-beta-D-GlcNAc}-L-asparaginyl-[protein] + UDP + H(+). The enzyme catalyses an N(4)-{beta-D-GlcNAc-(1-&gt;2)-alpha-D-Man-(1-&gt;3)-[beta-D-GlcNAc-(1-&gt;2)-[beta-D-GlcNAc-(1-&gt;6)]-alpha-D-Man-(1-&gt;6)]-beta-D-Man-(1-&gt;4)-beta-D-GlcNAc-(1-&gt;4)-beta-D-GlcNAc}-L-asparaginyl-[protein] + UDP-N-acetyl-alpha-D-glucosamine = an N(4)-{beta-D-GlcNAc-(1-&gt;2)-[beta-D-GlcNAc-(1-&gt;4)]-alpha-D-Man-(1-&gt;3)-[beta-D-GlcNAc-(1-&gt;2)-[beta-D-GlcNAc-(1-&gt;6)]-alpha-D-Man-(1-&gt;6)]-beta-D-Man-(1-&gt;4)-beta-D-GlcNAc-(1-&gt;4)-beta-D-GlcNAc}-L-asparaginyl-[protein] + UDP + H(+). It catalyses the reaction an N(4)-{beta-D-GlcNAc-(1-&gt;2)-alpha-D-Man-(1-&gt;3)-[beta-D-GlcNAc-(1-&gt;2)-alpha-D-Man-(1-&gt;6)]-beta-D-Man-(1-&gt;4)-beta-D-GlcNAc-(1-&gt;4)-[alpha-L-Fuc-(1-&gt;6)]-beta-D-GlcNAc}-L-asparaginyl-[protein] + UDP-N-acetyl-alpha-D-glucosamine = N(4)-{beta-D-GlcNAc-(1-&gt;2)-[beta-D-GlcNAc-(1-&gt;4)]-alpha-D-Man-(1-&gt;3)-[beta-D-GlcNAc-(1-&gt;2)-alpha-D-Man-(1-&gt;6)]-beta-D-Man-(1-&gt;4)-beta-D-GlcNAc-(1-&gt;4)-[alpha-L-Fuc-(1-&gt;6)]-beta-D-GlcNAc}-asparaginyl-[protein] + UDP + H(+). The catalysed reaction is an N(4)-{beta-D-GlcNAc-(1-&gt;2)-alpha-D-Man-(1-&gt;3)-[beta-D-Gal-(1-&gt;4)-beta-D-GlcNAc-(1-&gt;2)-alpha-D-Man-(1-&gt;6)]-beta-D-Man-(1-&gt;4)-beta-D-GlcNAc-(1-&gt;4)-beta-D-GlcNAc}-L-asparaginyl-[protein] + UDP-N-acetyl-alpha-D-glucosamine = an N(4)-{beta-D-GlcNAc-(1-&gt;2)-[beta-D-GlcNAc-(1-&gt;4)]-alpha-D-Man-(1-&gt;3)-[beta-D-Gal-(1-&gt;4)-beta-D-GlcNAc-(1-&gt;2)-alpha-D-Man-(1-&gt;6)]-beta-D-Man-(1-&gt;4)-beta-D-GlcNAc-(1-&gt;4)-beta-D-GlcNAc}-L-asparaginyl-[protein] + UDP + H(+). It carries out the reaction N(4)-{beta-D-GlcNAc-(1-&gt;2)-alpha-D-Man-(1-&gt;3)-[alpha-D-Man-(1-&gt;3)-{alpha-D-Man-(1-&gt;6)}-alpha-D-Man-(1-&gt;6)]-beta-D-Man-(1-&gt;4)-beta-D-GlcNAc-(1-&gt;4)-beta-D-GlcNAc}-asparaginyl-[protein] + UDP-N-acetyl-alpha-D-glucosamine = N(4)-{beta-D-GlcNAc-(1-&gt;2)-[beta-D-GlcNAc-(1-&gt;4)]-alpha-D-Man-(1-&gt;3)-[alpha-D-Man-(1-&gt;3)-{alpha-D-Man-(1-&gt;6)}-alpha-D-Man-(1-&gt;6)]-beta-D-Man-(1-&gt;4)-beta-D-GlcNAc-(1-&gt;4)-beta-D-GlcNAc}-asparaginyl-[protein] + UDP + H(+). The enzyme catalyses N(4)-{beta-D-GlcNAc-(1-&gt;2)-alpha-D-Man-(1-&gt;3)-beta-D-Man-(1-&gt;4)-beta-D-GlcNAc-(1-&gt;4)-beta-D-GlcNAc}-asparaginyl-[protein] + UDP-N-acetyl-alpha-D-glucosamine = N(4)-{beta-D-GlcNAc-(1-&gt;2)-[beta-D-GlcNAc-(1-&gt;4)]-alpha-D-Man-(1-&gt;3)-beta-D-Man-(1-&gt;4)-beta-D-GlcNAc-(1-&gt;4)-beta-D-GlcNAc}-asparaginyl-[protein] + UDP + H(+). It participates in protein modification; protein glycosylation. With respect to regulation, inhibited by UDP. Glycosyltransferase that catalyze the transfer of GlcNAc from UDP-GlcNAc to the GlcNAcbeta1-2Manalpha1-3 arm of the core structure of N-linked glycans through a beta1-4 linkage and participates in the production of tri- and tetra-antennary N-linked sugar chains. Involved in glucose transport by mediating SLC2A2/GLUT2 glycosylation, thereby controlling cell-surface expression of SLC2A2 in pancreatic beta cells. In Rattus norvegicus (Rat), this protein is Alpha-1,3-mannosyl-glycoprotein 4-beta-N-acetylglucosaminyltransferase A.